The chain runs to 76 residues: Putative small nuclear ribonucleoprotein G-like protein 15 (76 aa).

The region spanning 4–76 (AHPPELKKFT…IIMLEALERV (73 aa)) is the Sm domain.

It belongs to the snRNP Sm proteins family.

It is found in the nucleus. Functionally, associated with snRNP U1, U2, U4/U6 and U5. In Homo sapiens (Human), this protein is Putative small nuclear ribonucleoprotein G-like protein 15 (SNRPGP15).